Reading from the N-terminus, the 157-residue chain is Ribosomal RNA large subunit methyltransferase H (157 aa).

Residues Leu-74, Gly-106, and 125–130 (LSDMTL) each bind S-adenosyl-L-methionine.

Belongs to the RNA methyltransferase RlmH family. In terms of assembly, homodimer.

It is found in the cytoplasm. It carries out the reaction pseudouridine(1915) in 23S rRNA + S-adenosyl-L-methionine = N(3)-methylpseudouridine(1915) in 23S rRNA + S-adenosyl-L-homocysteine + H(+). Specifically methylates the pseudouridine at position 1915 (m3Psi1915) in 23S rRNA. This is Ribosomal RNA large subunit methyltransferase H from Desulfovibrio desulfuricans (strain ATCC 27774 / DSM 6949 / MB).